A 220-amino-acid polypeptide reads, in one-letter code: MKSITINGSKRESVGKKATKALRNAGQVPCVLYGVEGDPLHFAAEEISFKNLVYTPDVHTVKIKLKSGESYDAILQDIQFHPLTDAILHIDFYQIFGEKPITMEIPIHTEGVARGVKNGGVLRYNLRRLKVRGLPADLPDYIVANVSKLKIGQKLYVTGVDSKDFVIQHPDNTVICQVRTSRNLVELEDEDEDEDEVAADEVPATEVDDQAAVKEGEGKE.

The span at 186-199 (ELEDEDEDEDEVAA) shows a compositional bias: acidic residues. The disordered stretch occupies residues 186 to 220 (ELEDEDEDEDEVAADEVPATEVDDQAAVKEGEGKE). A compositionally biased stretch (basic and acidic residues) spans 211-220 (AAVKEGEGKE).

This sequence belongs to the bacterial ribosomal protein bL25 family. CTC subfamily. Part of the 50S ribosomal subunit; part of the 5S rRNA/L5/L18/L25 subcomplex. Contacts the 5S rRNA. Binds to the 5S rRNA independently of L5 and L18.

Functionally, this is one of the proteins that binds to the 5S RNA in the ribosome where it forms part of the central protuberance. This is Large ribosomal subunit protein bL25 from Christiangramia forsetii (strain DSM 17595 / CGMCC 1.15422 / KT0803) (Gramella forsetii).